Reading from the N-terminus, the 545-residue chain is EH domain-containing protein 1 (545 aa).

2 consecutive EF-hand domains span residues 14 to 49 (ENQM…SNLP) and 50 to 83 (RPEL…VSLA). In terms of domain architecture, EH spans 15-93 (NQMIYKEWFE…QTGHEISHEV (79 aa)). 8 residues coordinate Ca(2+): Asp-27, Asp-29, Asp-31, Arg-33, Asp-38, Asp-61, Tyr-67, and Glu-72. The 236-residue stretch at 194 to 429 (FDAKPMVMLL…DLLADLKDIP (236 aa)) folds into the Dynamin-type G domain. Residues 204-211 (GQYSTGKT) are G1 motif. 204-211 (GQYSTGKT) contacts GTP. The segment at 230–231 (EP) is G2 motif. Residues 292 to 295 (DTPG) form a G3 motif region. Residues 309–313 (DFTGV) and Lys-359 contribute to the GTP site. The segment at 358–361 (NKAD) is G4 motif. A region of interest (G5 motif) is located at residue Val-382. Position 395–398 (395–398 (SFSD)) interacts with GTP. The stretch at 467–490 (KAKAQQKLIDNLEDEFGKVQREHH) forms a coiled coil.

Belongs to the TRAFAC class dynamin-like GTPase superfamily. Dynamin/Fzo/YdjA family. EHD subfamily. Homooligomer, and heterooligomer with EHD2.

The protein localises to the endosome membrane. It localises to the cell membrane. The protein resides in the cytoplasm. The catalysed reaction is GTP + H2O = GDP + phosphate + H(+). Its function is as follows. Involved in endocytosis positive regulation. Acts in early endocytic membrane fusion and membrane trafficking of recycling endosomes. Confers salt tolerance. This chain is EH domain-containing protein 1, found in Arabidopsis thaliana (Mouse-ear cress).